Here is a 428-residue protein sequence, read N- to C-terminus: Phosphomethylpyrimidine synthase (428 aa).

Substrate contacts are provided by residues Asn66, Met94, Tyr123, His162, 184–186 (SRG), 225–228 (DALR), and Glu264. Residue His268 participates in Zn(2+) binding. Tyr291 is a binding site for substrate. Residue His332 coordinates Zn(2+). [4Fe-4S] cluster-binding residues include Cys408, Cys411, and Cys415.

The protein belongs to the ThiC family. The cofactor is [4Fe-4S] cluster.

The catalysed reaction is 5-amino-1-(5-phospho-beta-D-ribosyl)imidazole + S-adenosyl-L-methionine = 4-amino-2-methyl-5-(phosphooxymethyl)pyrimidine + CO + 5'-deoxyadenosine + formate + L-methionine + 3 H(+). Its pathway is cofactor biosynthesis; thiamine diphosphate biosynthesis. In terms of biological role, catalyzes the synthesis of the hydroxymethylpyrimidine phosphate (HMP-P) moiety of thiamine from aminoimidazole ribotide (AIR) in a radical S-adenosyl-L-methionine (SAM)-dependent reaction. This is Phosphomethylpyrimidine synthase from Sulfolobus acidocaldarius (strain ATCC 33909 / DSM 639 / JCM 8929 / NBRC 15157 / NCIMB 11770).